Here is a 793-residue protein sequence, read N- to C-terminus: Lon protease 1 (793 aa).

Positions 8-202 constitute a Lon N-terminal domain; sequence VPVIPLKNSV…KLLDRLQELK (195 aa). 354-361 provides a ligand contact to ATP; the sequence is GPPGVGKT. The Lon proteolytic domain occupies 590-770; that stretch reads LLPPGVVTGL…NEVLKITLGV (181 aa). Residues Ser676 and Lys719 contribute to the active site.

This sequence belongs to the peptidase S16 family. In terms of assembly, homohexamer. Organized in a ring with a central cavity.

The protein resides in the cytoplasm. It catalyses the reaction Hydrolysis of proteins in presence of ATP.. In terms of biological role, ATP-dependent serine protease that mediates the selective degradation of mutant and abnormal proteins as well as certain short-lived regulatory proteins. Required for cellular homeostasis and for survival from DNA damage and developmental changes induced by stress. Degrades polypeptides processively to yield small peptide fragments that are 5 to 10 amino acids long. Binds to DNA in a double-stranded, site-specific manner. This chain is Lon protease 1, found in Bdellovibrio bacteriovorus (strain ATCC 15356 / DSM 50701 / NCIMB 9529 / HD100).